A 283-amino-acid polypeptide reads, in one-letter code: Rhomboid-like protease 2 (283 aa).

Over residues 1–11 (MANIRTLSDYA) the composition is skewed to polar residues. Residues 1-26 (MANIRTLSDYASSPPRGSSALEGEVG) form a disordered region. Transmembrane regions (helical) follow at residues 62 to 82 (IIII…AGLA), 114 to 134 (ICPL…WVQI), and 149 to 169 (LLAV…AVLF). Ser-178 (nucleophile) is an active-site residue. 4 consecutive transmembrane segments (helical) span residues 179 to 199 (TAVF…WHAI), 205 to 225 (AIIS…GSHM), 227 to 247 (SVGH…LNEN), and 260 to 280 (LTSQ…IFLV). His-230 is a catalytic residue.

This sequence belongs to the peptidase S54 family.

It is found in the membrane. The catalysed reaction is Cleaves type-1 transmembrane domains using a catalytic dyad composed of serine and histidine that are contributed by different transmembrane domains.. Serine protease involved in intramembrane proteolysis and the subsequent release of polypeptides from their membrane anchors. The sequence is that of Rhomboid-like protease 2 (ROM2) from Toxoplasma gondii.